Consider the following 429-residue polypeptide: Adenylosuccinate synthetase (429 aa).

Residues 12-18 and 40-42 each bind GTP; these read GDEGKGK and GHT. D13 acts as the Proton acceptor in catalysis. D13 and G40 together coordinate Mg(2+). Residues 13 to 16, 38 to 41, T128, R142, Q223, T238, and R302 each bind IMP; these read DEGK and NAGH. H41 acts as the Proton donor in catalysis. 298–304 lines the substrate pocket; sequence VNTGRKR. GTP-binding positions include R304, 330–332, and 412–414; these read KLD and GVG.

The protein belongs to the adenylosuccinate synthetase family. In terms of assembly, homodimer. The cofactor is Mg(2+).

Its subcellular location is the cytoplasm. The catalysed reaction is IMP + L-aspartate + GTP = N(6)-(1,2-dicarboxyethyl)-AMP + GDP + phosphate + 2 H(+). It functions in the pathway purine metabolism; AMP biosynthesis via de novo pathway; AMP from IMP: step 1/2. In terms of biological role, plays an important role in the de novo pathway of purine nucleotide biosynthesis. Catalyzes the first committed step in the biosynthesis of AMP from IMP. The sequence is that of Adenylosuccinate synthetase from Corynebacterium glutamicum (strain R).